The following is a 312-amino-acid chain: uncharacterized protein (312 aa).

Basic and acidic residues-rich tracts occupy residues Met1–Glu17 and Pro28–Leu39. The disordered stretch occupies residues Met1–Leu39.

This is an uncharacterized protein from Sinorhizobium fredii (strain NBRC 101917 / NGR234).